The following is a 285-amino-acid chain: Ribosomal RNA small subunit methyltransferase A (285 aa).

S-adenosyl-L-methionine-binding residues include Asn-30, Leu-32, Gly-57, Glu-78, Asp-101, and Asn-121.

The protein belongs to the class I-like SAM-binding methyltransferase superfamily. rRNA adenine N(6)-methyltransferase family. RsmA subfamily.

It is found in the cytoplasm. The catalysed reaction is adenosine(1518)/adenosine(1519) in 16S rRNA + 4 S-adenosyl-L-methionine = N(6)-dimethyladenosine(1518)/N(6)-dimethyladenosine(1519) in 16S rRNA + 4 S-adenosyl-L-homocysteine + 4 H(+). Functionally, specifically dimethylates two adjacent adenosines (A1518 and A1519) in the loop of a conserved hairpin near the 3'-end of 16S rRNA in the 30S particle. May play a critical role in biogenesis of 30S subunits. This is Ribosomal RNA small subunit methyltransferase A from Treponema pallidum (strain Nichols).